The chain runs to 2309 residues: Collagen alpha-4(VI) chain (2309 aa).

A signal peptide spans 1–22 (MGTWKTFWLIISLAAGLGFVKS). The segment at 21–1410 (KSQRIVCREA…TCCNMYAKCY (1390 aa)) is nonhelical region. VWFA domains lie at 34–206 (DIVF…AQKL), 235–413 (DIVF…LQAL), 430–653 (DVVF…FQRV), 634–811 (DLVF…GNKL), 849–1018 (DIYF…IRDI), and 1030–1199 (DIIF…EKEI). The N-linked (GlcNAc...) asparagine glycan is linked to Asn-188. Asn-754 is a glycosylation site (N-linked (GlcNAc...) asparagine). Asn-1114 is a glycosylation site (N-linked (GlcNAc...) asparagine). The triple-helical region stretch occupies residues 1411-1744 (GDDGIRGEPG…GKMGTKGSKG (334 aa)). Residues 1414–1430 (GIRGEPGSRGEQGERGL) are compositionally biased toward basic and acidic residues. The interval 1414 to 1746 (GIRGEPGSRG…MGTKGSKGLA (333 aa)) is disordered. Over residues 1480–1489 (GEEGVGGLDG) the composition is skewed to gly residues. Positions 1527-1529 (RGD) match the Cell attachment site motif. Composition is skewed to low complexity over residues 1605–1621 (PRGR…KGDP) and 1650–1669 (PAGE…PGLF). The segment at 1745 to 2309 (LADRTPCEIV…EGECLNYVLK (565 aa)) is nonhelical region. VWFA domains are found at residues 1776–1957 (EVVF…ASCT) and 1982–2187 (DLVF…LNLL). Residues 2208–2210 (RGD) carry the Cell attachment site motif. The interval 2262–2300 (ALGSHGKDRADTEDIDQETPAKGRHLGPTHGPCPMGPEE) is disordered.

The protein belongs to the type VI collagen family. As to quaternary structure, trimers composed of three different chains: alpha-1(VI), alpha-2(VI), and alpha-3(VI) or alpha-4(VI) or alpha-5(VI) or alpha-6(VI). In terms of processing, prolines at the third position of the tripeptide repeating unit (G-X-Y) are hydroxylated in some or all of the chains. In newborn, it is expressed in lung, kidney, brain, intestine, skin, sternum and, at weak level, calvaria. In adult, it is almost absent with some weak expression in ovary and very weak expression in spleen, lung, uterus and brain.

Its subcellular location is the secreted. It is found in the extracellular space. The protein resides in the extracellular matrix. Functionally, collagen VI acts as a cell-binding protein. This Mus musculus (Mouse) protein is Collagen alpha-4(VI) chain (Col6a4).